The primary structure comprises 213 residues: Nucleoside triphosphate pyrophosphatase (213 aa).

Asp79 acts as the Proton acceptor in catalysis.

Belongs to the Maf family. A divalent metal cation serves as cofactor.

It is found in the cytoplasm. It carries out the reaction a ribonucleoside 5'-triphosphate + H2O = a ribonucleoside 5'-phosphate + diphosphate + H(+). The enzyme catalyses a 2'-deoxyribonucleoside 5'-triphosphate + H2O = a 2'-deoxyribonucleoside 5'-phosphate + diphosphate + H(+). Nucleoside triphosphate pyrophosphatase. May have a dual role in cell division arrest and in preventing the incorporation of modified nucleotides into cellular nucleic acids. In Mycobacterium leprae (strain Br4923), this protein is Nucleoside triphosphate pyrophosphatase.